The sequence spans 2643 residues: BAH and coiled-coil domain-containing protein 1 (2643 aa).

Disordered stretches follow at residues S23–P45 and S84–H106. Residue K220 is modified to N6-acetyllysine. Composition is skewed to basic and acidic residues over residues K224–K249 and E683–V702. 5 disordered regions span residues K224 to G273, P674 to Q704, G721 to E758, R985 to A1023, and T1038 to P1299. Residues R985–P1003 are compositionally biased toward basic and acidic residues. Pro residues predominate over residues R1133 to S1149. A compositionally biased stretch (polar residues) spans A1210–E1224. The span at Q1269–V1284 shows a compositional bias: acidic residues. Coiled-coil stretches lie at residues A1346–A1373 and L1437–S1486. The segment covering Q1466–S1484 has biased composition (basic and acidic residues). Disordered regions lie at residues Q1466–K1520, G1537–S1559, K1604–M1641, R1746–T1781, F1875–L1896, S2055–G2124, C2322–P2341, and S2349–E2386. The span at P1487–S1501 shows a compositional bias: basic residues. Over residues P1631–M1641 the composition is skewed to basic and acidic residues. Basic residues predominate over residues G1757–T1767. The span at F1875–A1892 shows a compositional bias: acidic residues. A compositionally biased stretch (low complexity) spans S2349 to S2374. Positions D2375–E2386 are enriched in acidic residues. One can recognise a BAH domain in the interval E2517 to D2637.

This is BAH and coiled-coil domain-containing protein 1 (Bahcc1) from Mus musculus (Mouse).